The following is a 1476-amino-acid chain: Copper-transporting ATPase 1 (1476 aa).

The Cytoplasmic segment spans residues 1-642 (MEPSMDVNSV…HKREIKQWRS (642 aa)). HMA domains are found at residues 8 to 74 (NSVT…FDAL) and 85 to 151 (TDTL…LETG). 3 residues coordinate Cu(+): threonine 18, cysteine 19, and cysteine 22. Position 152 is a phosphothreonine (threonine 152). HMA domains are found at residues 171–237 (VVLK…FPAF) and 276–342 (STAT…PGQY). Cu(+) contacts are provided by cysteine 182, cysteine 185, cysteine 287, and cysteine 290. Threonine 326 is subject to Phosphothreonine. Residues serine 338, serine 352, serine 356, and serine 361 each carry the phosphoserine modification. 3 consecutive HMA domains span residues 376-442 (QETV…FDAV), 478-544 (SKCY…FGAT), and 554-620 (GILK…FEAS). Cysteine 387, cysteine 390, cysteine 489, cysteine 492, cysteine 565, and cysteine 568 together coordinate Cu(+). A helical transmembrane segment spans residues 643–665 (SFLVSLFFCTPVMGLMMYMMAME). 2 N-linked (GlcNAc...) asparagine glycosylation sites follow: asparagine 674 and asparagine 685. 3 helical membrane-spanning segments follow: residues 695–717 (ILPG…QFFG), 736–760 (MDVL…VAMY), and 770–788 (SFDT…RWLE). An N-linked (GlcNAc...) asparagine glycan is attached at asparagine 887. Residues 930 to 952 (YFVPFIVLVSIATLLVWIIIGFQ) form a helical membrane-spanning segment. N-linked (GlcNAc...) asparagine glycosylation occurs at asparagine 953. Residues 978 to 998 (AFQASITVLCIACPCSLGLAT) form a helical membrane-spanning segment. Residue aspartate 1034 is the 4-aspartylphosphate intermediate of the active site. N-linked (GlcNAc...) asparagine glycans are attached at residues asparagine 1130 and asparagine 1134. 2 consecutive transmembrane segments (helical) span residues 1347 to 1373 (INFL…IGLV) and 1379 to 1397 (GSAA…SLFL). Serine 1420 and serine 1422 each carry phosphoserine. Asparagine 1448 carries an N-linked (GlcNAc...) asparagine glycan. 7 positions are modified to phosphoserine: serine 1450, serine 1453, serine 1456, serine 1459, serine 1463, serine 1466, and serine 1476.

Belongs to the cation transport ATPase (P-type) (TC 3.A.3) family. In terms of assembly, monomer. Interacts with PDZD11. Interacts with ATOX1 and COMMD1. Interacts with TYRP1. Directly interacts with SOD3; this interaction is copper-dependent and is required for SOD3 activity. In terms of tissue distribution, expressed in most tissues except liver.

Its subcellular location is the golgi apparatus. The protein resides in the trans-Golgi network membrane. It localises to the cell membrane. The enzyme catalyses Cu(+)(in) + ATP + H2O = Cu(+)(out) + ADP + phosphate + H(+). Its function is as follows. May function in the export of copper from the cytoplasm to an intracellular organelle. It may serve as well for the export of other metals. The chain is Copper-transporting ATPase 1 (ATP7A) from Cricetulus griseus (Chinese hamster).